A 131-amino-acid chain; its full sequence is uncharacterized protein (131 aa).

In terms of domain architecture, CMP/dCMP-type deaminase spans 1 to 116 (MYMARMLSEM…EMLEASSIQC (116 aa)).

This is an uncharacterized protein from Caenorhabditis elegans.